A 388-amino-acid polypeptide reads, in one-letter code: MNLHEYQAKQLFAEFGLPVPEGYACDTPQEAFEAAGRISTAKKVVKCQVHAGGRGKAGGVELHDTKEGVKEFAQKWLGKNLVTFQTDANGQPVSKILVEEASNIANELYLGAVVDRASQRIVFMASTEGGVDIEKIAEETPELIHKAAIDPLVGPQAYQGRELAFKLGLEGDQIKQFVKIFMGLGNMFAQYDLALLEINPLVVTAEGSLLCLDGKINIDSNAMYRQPKLREMHDPSQEDEREAHAAQWELNYVALDGSIGCMVNGAGLAMGTMDIVNLHGGQPANFLDVGGGATKERVTEAFKIILSDSNVKAVLVNIFGGIVRCDLIADGIIGAVEEVGVEVPVVVRLEGNNAPLGSQKLAESGLNIIAATSLTEAAEKVVAAAEGK.

An ATP-grasp domain is found at 9-244 (KQLFAEFGLP…PSQEDEREAH (236 aa)). ATP is bound by residues Lys-46, 53-55 (GRG), Glu-99, Ser-102, and Glu-107. Asn-199 and Asp-213 together coordinate Mg(2+). Substrate is bound by residues Asn-264 and 321–323 (GIV).

Belongs to the succinate/malate CoA ligase beta subunit family. In terms of assembly, heterotetramer of two alpha and two beta subunits. It depends on Mg(2+) as a cofactor.

It catalyses the reaction succinate + ATP + CoA = succinyl-CoA + ADP + phosphate. It carries out the reaction GTP + succinate + CoA = succinyl-CoA + GDP + phosphate. Its pathway is carbohydrate metabolism; tricarboxylic acid cycle; succinate from succinyl-CoA (ligase route): step 1/1. Its function is as follows. Succinyl-CoA synthetase functions in the citric acid cycle (TCA), coupling the hydrolysis of succinyl-CoA to the synthesis of either ATP or GTP and thus represents the only step of substrate-level phosphorylation in the TCA. The beta subunit provides nucleotide specificity of the enzyme and binds the substrate succinate, while the binding sites for coenzyme A and phosphate are found in the alpha subunit. The polypeptide is Succinate--CoA ligase [ADP-forming] subunit beta (Aliivibrio fischeri (strain ATCC 700601 / ES114) (Vibrio fischeri)).